Reading from the N-terminus, the 118-residue chain is MRRAGLGEGVPPGNYGNYGYANSGYSACEEENERLTESLRSKVTAIKSLSIEIGHEVKTQNKLLAEMDSQFDSTTGFLGKTMGKLKILSRGSQTKLLCYMMLFSLFVFFIIYWIIKLR.

Residues 1-94 lie on the Cytoplasmic side of the membrane; that stretch reads MRRAGLGEGV…LKILSRGSQT (94 aa). In terms of domain architecture, t-SNARE coiled-coil homology spans 26–88; it reads SACEEENERL…GKTMGKLKIL (63 aa). Serine 50 carries the phosphoserine modification. The helical; Anchor for type IV membrane protein transmembrane segment at 95–115 threads the bilayer; it reads KLLCYMMLFSLFVFFIIYWII. The Vesicular portion of the chain corresponds to 116–118; that stretch reads KLR.

This sequence belongs to the BET1 family. Interacts with SNARE complex members GOSR2, SEC22B and STX5. Interacts with LMAN1/ERGIC53. Interacts with STX17. In terms of tissue distribution, expressed in muscle.

Its subcellular location is the endoplasmic reticulum membrane. It is found in the golgi apparatus. It localises to the cis-Golgi network membrane. The protein resides in the golgi apparatus membrane. Its function is as follows. Required for vesicular transport from the ER to the Golgi complex. Functions as a SNARE involved in the docking process of ER-derived vesicles with the cis-Golgi membrane. The protein is BET1 homolog (BET1) of Homo sapiens (Human).